Here is a 145-residue protein sequence, read N- to C-terminus: Large ribosomal subunit protein uL13 (145 aa).

Belongs to the universal ribosomal protein uL13 family. As to quaternary structure, part of the 50S ribosomal subunit.

Its function is as follows. This protein is one of the early assembly proteins of the 50S ribosomal subunit, although it is not seen to bind rRNA by itself. It is important during the early stages of 50S assembly. The sequence is that of Large ribosomal subunit protein uL13 from Bacillus cytotoxicus (strain DSM 22905 / CIP 110041 / 391-98 / NVH 391-98).